The sequence spans 267 residues: Putative carbamate hydrolase RutD (267 aa).

Residues 14 to 115 (PVMVMISGLG…SALVIINGWL (102 aa)) enclose the AB hydrolase-1 domain.

It belongs to the AB hydrolase superfamily. Hydrolase RutD family.

The enzyme catalyses carbamate + 2 H(+) = NH4(+) + CO2. In terms of biological role, involved in pyrimidine catabolism. May facilitate the hydrolysis of carbamate, a reaction that can also occur spontaneously. The sequence is that of Putative carbamate hydrolase RutD from Cronobacter turicensis (strain DSM 18703 / CCUG 55852 / LMG 23827 / z3032).